We begin with the raw amino-acid sequence, 384 residues long: Carbamoyl phosphate synthase small chain (384 aa).

The segment at 1-192 is CPSase; sequence MPIAAAKPAL…FGPVAEQQGQ (192 aa). L-glutamine is bound by residues S51, G244, and G246. A Glutamine amidotransferase type-1 domain is found at 196 to 381; it reads TVVALDFGVK…VKLMRQQKAE (186 aa). C272 (nucleophile) is an active-site residue. Positions 273, 276, 312, 314, and 315 each coordinate L-glutamine. Catalysis depends on residues H354 and E356.

Belongs to the CarA family. Composed of two chains; the small (or glutamine) chain promotes the hydrolysis of glutamine to ammonia, which is used by the large (or ammonia) chain to synthesize carbamoyl phosphate. Tetramer of heterodimers (alpha,beta)4.

It catalyses the reaction hydrogencarbonate + L-glutamine + 2 ATP + H2O = carbamoyl phosphate + L-glutamate + 2 ADP + phosphate + 2 H(+). The enzyme catalyses L-glutamine + H2O = L-glutamate + NH4(+). It functions in the pathway amino-acid biosynthesis; L-arginine biosynthesis; carbamoyl phosphate from bicarbonate: step 1/1. The protein operates within pyrimidine metabolism; UMP biosynthesis via de novo pathway; (S)-dihydroorotate from bicarbonate: step 1/3. Functionally, small subunit of the glutamine-dependent carbamoyl phosphate synthetase (CPSase). CPSase catalyzes the formation of carbamoyl phosphate from the ammonia moiety of glutamine, carbonate, and phosphate donated by ATP, constituting the first step of 2 biosynthetic pathways, one leading to arginine and/or urea and the other to pyrimidine nucleotides. The small subunit (glutamine amidotransferase) binds and cleaves glutamine to supply the large subunit with the substrate ammonia. This Synechocystis sp. (strain ATCC 27184 / PCC 6803 / Kazusa) protein is Carbamoyl phosphate synthase small chain.